The following is a 392-amino-acid chain: Chorismate synthase (392 aa).

The NADP(+) site is built by Arg-40 and Arg-46. Residues 135–137 (RAS), 256–257 (QA), Gly-300, 315–319 (KPIAT), and Arg-341 each bind FMN.

This sequence belongs to the chorismate synthase family. Homotetramer. It depends on FMNH2 as a cofactor.

It catalyses the reaction 5-O-(1-carboxyvinyl)-3-phosphoshikimate = chorismate + phosphate. It participates in metabolic intermediate biosynthesis; chorismate biosynthesis; chorismate from D-erythrose 4-phosphate and phosphoenolpyruvate: step 7/7. Functionally, catalyzes the anti-1,4-elimination of the C-3 phosphate and the C-6 proR hydrogen from 5-enolpyruvylshikimate-3-phosphate (EPSP) to yield chorismate, which is the branch point compound that serves as the starting substrate for the three terminal pathways of aromatic amino acid biosynthesis. This reaction introduces a second double bond into the aromatic ring system. The protein is Chorismate synthase of Nocardioides sp. (strain ATCC BAA-499 / JS614).